Reading from the N-terminus, the 298-residue chain is Protein ILRUN (298 aa).

The tract at residues 199 to 277 (NTQPHRKVEG…SVNLSPSSHA (79 aa)) is disordered. Phosphoserine occurs at positions 215 and 222. The segment covering 242–255 (TWAPAPDTWAPAPD) has biased composition (low complexity). Positions 262–277 (NRLSQNSVNLSPSSHA) are enriched in polar residues. The residue at position 272 (Ser272) is a Phosphoserine.

As to quaternary structure, interacts with IRF3; the interaction inhibits IRF3 binding to its DNA consensus sequence. Expressed in lung (at protein level).

It is found in the cytoplasm. It localises to the nucleus. Negative regulator of innate antiviral response. Blocks IRF3-dependent cytokine production such as IFNA, IFNB and TNF. Interacts with IRF3 and inhibits IRF3 recruitment to type I IFN promoter sequences while also reducing nuclear levels of the coactivators EP300 and CREBBP. The protein is Protein ILRUN of Homo sapiens (Human).